The sequence spans 106 residues: UPF0145 protein Pput_2816 (106 aa).

This sequence belongs to the UPF0145 family.

The sequence is that of UPF0145 protein Pput_2816 from Pseudomonas putida (strain ATCC 700007 / DSM 6899 / JCM 31910 / BCRC 17059 / LMG 24140 / F1).